Consider the following 209-residue polypeptide: Casparian strip membrane protein 1 (209 aa).

At 1–46 (MEKSESTKIDVVETNKERKGKAPLLGKAPVVAAAVVHAKGGGAKRG) the chain is on the cytoplasmic side. Residues 47 to 67 (IAIFDLILRIAAFASALGAAV) form a helical membrane-spanning segment. Residues 68–96 (AMATTEETLPFFTQFFQFEASYDDLPTFT) lie on the Extracellular side of the membrane. Residues 97-117 (FFVVAMAIVVAYLVLSVPFSI) form a helical membrane-spanning segment. At 118–129 (VCIVRPHAVVPR) the chain is on the cytoplasmic side. Residues 130 to 150 (LLLIIFDTVIIALTTGAAGSS) form a helical membrane-spanning segment. Over 151–179 (AAIVYLAHNGNQDANWLAICQQFGDFCQR) the chain is Extracellular. Residues 180–200 (VSGAVVAAFVTVVILIFLVVL) traverse the membrane as a helical segment. Topologically, residues 201–209 (SASALRRHH) are cytoplasmic.

The protein belongs to the Casparian strip membrane proteins (CASP) family. In terms of assembly, homodimer and heterodimers.

Its subcellular location is the cell membrane. Its function is as follows. Regulates membrane-cell wall junctions and localized cell wall deposition. Required for establishment of the Casparian strip membrane domain (CSD) and the subsequent formation of Casparian strips, a cell wall modification of the root endodermis that determines an apoplastic barrier between the intraorganismal apoplasm and the extraorganismal apoplasm and prevents lateral diffusion. This is Casparian strip membrane protein 1 from Nicotiana tabacum (Common tobacco).